The following is a 235-amino-acid chain: Glycerol-3-phosphate acyltransferase (235 aa).

6 helical membrane-spanning segments follow: residues L4 to G24, S56 to F76, L94 to G114, L125 to W145, V152 to F172, and F191 to L211.

It belongs to the PlsY family. In terms of assembly, probably interacts with PlsX.

It localises to the cell inner membrane. The catalysed reaction is an acyl phosphate + sn-glycerol 3-phosphate = a 1-acyl-sn-glycero-3-phosphate + phosphate. The protein operates within lipid metabolism; phospholipid metabolism. Functionally, catalyzes the transfer of an acyl group from acyl-phosphate (acyl-PO(4)) to glycerol-3-phosphate (G3P) to form lysophosphatidic acid (LPA). This enzyme utilizes acyl-phosphate as fatty acyl donor, but not acyl-CoA or acyl-ACP. The chain is Glycerol-3-phosphate acyltransferase from Chlorobium luteolum (strain DSM 273 / BCRC 81028 / 2530) (Pelodictyon luteolum).